A 281-amino-acid polypeptide reads, in one-letter code: DegV domain-containing protein CPE2509 (281 aa).

The DegV domain occupies 4–279 (IAIITDSSCD…PGMVGVSIQK (276 aa)). Hexadecanoate-binding residues include threonine 60 and serine 93.

In terms of biological role, may bind long-chain fatty acids, such as palmitate, and may play a role in lipid transport or fatty acid metabolism. In Clostridium perfringens (strain 13 / Type A), this protein is DegV domain-containing protein CPE2509.